The chain runs to 688 residues: Glycine--tRNA ligase beta subunit (688 aa).

The protein belongs to the class-II aminoacyl-tRNA synthetase family. Tetramer of two alpha and two beta subunits.

It localises to the cytoplasm. The enzyme catalyses tRNA(Gly) + glycine + ATP = glycyl-tRNA(Gly) + AMP + diphosphate. This chain is Glycine--tRNA ligase beta subunit, found in Vibrio atlanticus (strain LGP32) (Vibrio splendidus (strain Mel32)).